Here is a 1616-residue protein sequence, read N- to C-terminus: Myosin-IIIa (1616 aa).

One can recognise a Protein kinase domain in the interval 21–287 (WEITETIGKG…VSELLQHKFI (267 aa)). ATP-binding positions include 27-35 (IGKGTYGKV) and Lys-50. Residue Asp-150 is the Proton acceptor of the active site. Residues 338–1053 (KDVDDLATLE…HVEQLNLMRK (716 aa)) form the Myosin motor domain. The actin-binding stretch occupies residues 934-956 (LMDLLSKMVVGQPHFVRCIKPNS). 3 consecutive IQ domains span residues 1055–1084 (AIDK…KRKE), 1082–1111 (RKES…MKNT), and 1346–1375 (EDKA…SSFK). Residues 1401–1479 (EEINNIKKKD…RRVSSQQCLS (79 aa)) form an interaction with MORN4 region. 2 disordered regions span residues 1545-1567 (LPSR…QQEL) and 1581-1616 (AESP…VQQS). 2 stretches are compositionally biased toward basic and acidic residues: residues 1550 to 1564 (GPKE…RRPQ) and 1583 to 1592 (SPEKEEEREP). Residues 1602 to 1616 (LLRKTSQRRRLVQQS) show a composition bias toward basic residues.

It in the C-terminal section; belongs to the TRAFAC class myosin-kinesin ATPase superfamily. Myosin family. This sequence in the N-terminal section; belongs to the protein kinase superfamily. STE Ser/Thr protein kinase family. Interacts with MORN4. Interacts (via C-terminus) with ESPN and ESPNL. As to expression, strongest expression in retina, retinal pigment epithelial cells, cochlea and pancreas.

It is found in the cytoplasm. The protein resides in the cytoskeleton. It localises to the cell projection. Its subcellular location is the filopodium tip. The protein localises to the stereocilium. It carries out the reaction L-seryl-[protein] + ATP = O-phospho-L-seryl-[protein] + ADP + H(+). The catalysed reaction is L-threonyl-[protein] + ATP = O-phospho-L-threonyl-[protein] + ADP + H(+). The enzyme catalyses ATP + H2O = ADP + phosphate + H(+). Functionally, actin-dependent motor protein with a protein kinase activity, playing an essential role in hearing. Probably also plays a role in vision. Required for normal cochlear hair bundle development and hearing. Plays an important role in the early steps of cochlear hair bundle morphogenesis. Influences the number and lengths of stereocilia to be produced and limits the growth of microvilli within the forming auditory hair bundles thereby contributing to the architecture of the hair bundle, including its staircase pattern. Involved in the elongation of actin in stereocilia tips by transporting the actin regulatory factor ESPN to the plus ends of actin filaments. This chain is Myosin-IIIa (MYO3A), found in Homo sapiens (Human).